A 3674-amino-acid polypeptide reads, in one-letter code: Spectrin beta chain, non-erythrocytic 5 (3674 aa).

Positions 1 to 37 (MAGQPHSPRELLGAAGHRSRRPSTELRVPPSPSLTMD) are disordered. Positions 1–279 (MAGQPHSPRE…IMTYVSLYYH (279 aa)) are actin-binding. 2 Calponin-homology (CH) domains span residues 54–159 (QMQE…LRFQ) and 177–282 (LSTK…HYCS). Spectrin repeat units follow at residues 307-416 (LQTQ…ALQQ), 428-529 (ARRF…RKQV), 642-742 (AEFL…ARLQ), 747-810 (VLQY…QGRA), 900-996 (GFCS…AVQL), 1103-1206 (ARQS…WLQE), 1209-1311 (ELQK…RQLL), and 1315-1417 (QLQE…ELQQ). Residues 1441 to 1469 (ALQSSETGQDLRSSQRLQKRHQQLESESR) form a disordered region. Polar residues predominate over residues 1442–1456 (LQSSETGQDLRSSQR). Spectrin repeat units follow at residues 1521–1624 (ELHQ…CLQQ), 1628–1727 (FQQY…RELE), 1731–1835 (RLHE…ALRD), 1842–1940 (VHRD…AQLE), 1944–2046 (LLAR…ERLQ), 2052–2146 (QLFL…HALH), 2150–2253 (LMAS…ELED), 2256–2361 (NFLE…QQLE), 2366–2467 (IHVL…EALD), 2471–2574 (QAQK…QLQQ), 2577–2680 (ELQL…RLEE), 2683–2784 (QLQA…AKLQ), 2791–2890 (RLRR…TALE), 2894–2997 (LLLK…LLQQ), 3000–3103 (EAQQ…GLQE), 3106–3209 (QLHQ…ENLA), 3213–3311 (EVHS…QWLA), 3318–3415 (AFLG…RWQR), and 3422–3488 (LQKL…EQEL). One can recognise a PH domain in the interval 3533 to 3641 (TPTMEGSLEF…WWRALGSTAA (109 aa)).

It belongs to the spectrin family. As to quaternary structure, probably associates with an alpha chain. Interacts (via C-terminus) with TRPC4. As to expression, expressed at very low levels in many tissues, with strongest expression in cerebellum, spinal cord, stomach, pituitary gland, liver, pancreas, salivary gland, kidney, bladder, and heart.

It is found in the cytoplasm. The protein localises to the cytoskeleton. This chain is Spectrin beta chain, non-erythrocytic 5 (SPTBN5), found in Homo sapiens (Human).